Consider the following 335-residue polypeptide: GTPase Obg (335 aa).

Residues 1-158 (MFVDQITLEL…RLVELELKLI (158 aa)) enclose the Obg domain. Positions 159 to 334 (ADIGLVGFPN…LHDLFKSKLS (176 aa)) constitute an OBG-type G domain. GTP is bound by residues 165–172 (GFPNAGKS), 190–194 (FTTLH), 215–218 (DIPG), 285–288 (NKID), and 315–317 (SGL). Mg(2+) is bound by residues Ser-172 and Thr-192.

This sequence belongs to the TRAFAC class OBG-HflX-like GTPase superfamily. OBG GTPase family. In terms of assembly, monomer. Requires Mg(2+) as cofactor.

The protein resides in the cytoplasm. Functionally, an essential GTPase which binds GTP, GDP and possibly (p)ppGpp with moderate affinity, with high nucleotide exchange rates and a fairly low GTP hydrolysis rate. Plays a role in control of the cell cycle, stress response, ribosome biogenesis and in those bacteria that undergo differentiation, in morphogenesis control. The protein is GTPase Obg of Chlamydia muridarum (strain MoPn / Nigg).